The sequence spans 164 residues: MFAVIKTGGRQFRVVPNDVLEIGKITGDVGTIVQLGEVMAVGGDTPVLGFPFIEGASVAAEILDHKRGPKVIAFKKRRRKNSKRKRGYRDEITVIRVTEILTDDKAPTIGPRAKKEKKVEAAPADGEAPAKKAPAKKAAAKKAAPKAAAKKAPAKKAAPKAKSE.

Residues 105–164 are disordered; that stretch reads KAPTIGPRAKKEKKVEAAPADGEAPAKKAPAKKAAAKKAAPKAAAKKAPAKKAAPKAKSE. Residues 133-164 show a composition bias toward basic residues; that stretch reads APAKKAAAKKAAPKAAAKKAPAKKAAPKAKSE.

It belongs to the bacterial ribosomal protein bL21 family. As to quaternary structure, part of the 50S ribosomal subunit. Contacts protein L20.

This protein binds to 23S rRNA in the presence of protein L20. This is Large ribosomal subunit protein bL21 from Afipia carboxidovorans (strain ATCC 49405 / DSM 1227 / KCTC 32145 / OM5) (Oligotropha carboxidovorans).